Consider the following 142-residue polypeptide: Hemoglobin subunit alpha-1/2 (142 aa).

In terms of domain architecture, Globin spans 2–142; that stretch reads VLSADDKTNI…VSTVLTSKYR (141 aa). A Phosphoserine modification is found at S4. Residue K8 is modified to N6-succinyllysine. The residue at position 9 (T9) is a Phosphothreonine. Residue K12 is modified to N6-succinyllysine. K17 carries the post-translational modification N6-acetyllysine; alternate. Position 17 is an N6-succinyllysine; alternate (K17). Y25 is modified (phosphotyrosine). N6-succinyllysine is present on K41. S50 is modified (phosphoserine). H59 lines the O2 pocket. Position 88 (H88) interacts with heme b. Position 103 is a phosphoserine (S103). T109 is subject to Phosphothreonine. A phosphoserine mark is found at S125 and S132. A phosphothreonine mark is found at T135 and T138. A Phosphoserine modification is found at S139.

It belongs to the globin family. As to quaternary structure, heterotetramer of two alpha chains and two beta chains. As to expression, red blood cells.

Involved in oxygen transport from the lung to the various peripheral tissues. Functionally, hemopressin acts as an antagonist peptide of the cannabinoid receptor CNR1. Hemopressin-binding efficiently blocks cannabinoid receptor CNR1 and subsequent signaling. In Rattus norvegicus (Rat), this protein is Hemoglobin subunit alpha-1/2 (Hba1).